The chain runs to 142 residues: Large ribosomal subunit protein uL11 (142 aa).

The protein belongs to the universal ribosomal protein uL11 family. In terms of assembly, part of the ribosomal stalk of the 50S ribosomal subunit. Interacts with L10 and the large rRNA to form the base of the stalk. L10 forms an elongated spine to which L12 dimers bind in a sequential fashion forming a multimeric L10(L12)X complex. In terms of processing, one or more lysine residues are methylated.

Forms part of the ribosomal stalk which helps the ribosome interact with GTP-bound translation factors. In Sinorhizobium fredii (strain NBRC 101917 / NGR234), this protein is Large ribosomal subunit protein uL11.